Consider the following 507-residue polypeptide: Protein phosphatase 1J (507 aa).

Disordered regions lie at residues 1-102 and 197-220; these read MLNR…RLPW and LCLPSTPGTPGAPSPSQLVSPQSC. A compositionally biased stretch (low complexity) spans 14–23; it reads SSGGTSSQRS. T41 carries the phosphothreonine modification. Residues 59–73 show a composition bias toward polar residues; that stretch reads TAETTVSFSRPTFLQ. Phosphoserine is present on residues S65 and S75. In terms of domain architecture, PPM-type phosphatase spans 103 to 499; that stretch reads STGYAEVINA…DDISVFVIPL (397 aa). The span at 199–212 shows a compositional bias: low complexity; the sequence is LPSTPGTPGAPSPS.

Belongs to the PP2C family. Interacts with UBE2I/UBC9. Specifically expressed in the testicular germ cells.

The catalysed reaction is O-phospho-L-seryl-[protein] + H2O = L-seryl-[protein] + phosphate. The enzyme catalyses O-phospho-L-threonyl-[protein] + H2O = L-threonyl-[protein] + phosphate. In Mus musculus (Mouse), this protein is Protein phosphatase 1J (Ppm1j).